Consider the following 267-residue polypeptide: Interleukin-1 alpha (267 aa).

Positions 1-112 (MAKVPDLFED…DPEEGIIKPR (112 aa)) are excised as a propeptide. Asn64 carries N-linked (GlcNAc...) asparagine glycosylation. The residue at position 82 (Lys82) is an N6-acetyllysine. Positions 82–86 (KKRRL) are nuclear localization signal (NLS). At Ser87 the chain carries Phosphoserine. 2 N-linked (GlcNAc...) asparagine glycosylation sites follow: Asn100 and Asn141.

Belongs to the IL-1 family. Monomer. Interacts with TMED10; the interaction mediates the translocation from the cytoplasm into the ERGIC (endoplasmic reticulum-Golgi intermediate compartment) and thereby secretion. Interacts with IL1R1. Interacts with S100A13; this interaction is the first step in the export of IL1A, followed by direct translocation of this complex across the plasma membrane. Acetylated within its nuclear localization sequence, which impacts subcellular localization. In terms of processing, proteolytic processed by CAPN1 in a calcium-dependent manner. Cleavage from 31 kDa precursor to 18 kDa biologically active molecules. Post-translationally, phosphorylated. Phosphorylation greatly enhances susceptibility to digestion and promotes the conversion of pre-IL1A alpha to the biologically active IL1A.

The protein resides in the nucleus. The protein localises to the cytoplasm. It localises to the secreted. In terms of biological role, cytokine constitutively present intracellularly in nearly all resting non-hematopoietic cells that plays an important role in inflammation and bridges the innate and adaptive immune systems. After binding to its receptor IL1R1 together with its accessory protein IL1RAP, forms the high affinity interleukin-1 receptor complex. Signaling involves the recruitment of adapter molecules such as MYD88, IRAK1 or IRAK4. In turn, mediates the activation of NF-kappa-B and the three MAPK pathways p38, p42/p44 and JNK pathways. Within the cell, acts as an alarmin and cell death results in its liberation in the extracellular space after disruption of the cell membrane to induce inflammation and alert the host to injury or damage. In addition to its role as a danger signal, which occurs when the cytokine is passively released by cell necrosis, directly senses DNA damage and acts as signal for genotoxic stress without loss of cell integrity. The chain is Interleukin-1 alpha (IL1A) from Oryctolagus cuniculus (Rabbit).